We begin with the raw amino-acid sequence, 96 residues long: Elicitor peptide 3 (96 aa).

Residues 1-73 (MENLRNGEDN…EEEEEDGMTI (73 aa)) constitute a propeptide that is removed on maturation. The disordered stretch occupies residues 32-96 (SGLESSSSSS…PSSGKGGKHN (65 aa)). Low complexity predominate over residues 35–49 (ESSSSSSSSCDLSSS). Positions 52–71 (EEDESIDIKEEEEEEEEDGM) are enriched in acidic residues.

It belongs to the brassicaceae elicitor peptide family.

Its function is as follows. Elicitor of plant defense. This Arabidopsis thaliana (Mouse-ear cress) protein is Elicitor peptide 3 (PEP3).